The sequence spans 166 residues: Putative 4-hydroxy-4-methyl-2-oxoglutarate aldolase (166 aa).

Substrate is bound by residues 74-77 and Arg-96; that span reads GDQI. Position 97 (Asp-97) interacts with a divalent metal cation.

Belongs to the class II aldolase/RraA-like family. Homotrimer. Requires a divalent metal cation as cofactor.

It catalyses the reaction 4-hydroxy-4-methyl-2-oxoglutarate = 2 pyruvate. The catalysed reaction is oxaloacetate + H(+) = pyruvate + CO2. Its function is as follows. Catalyzes the aldol cleavage of 4-hydroxy-4-methyl-2-oxoglutarate (HMG) into 2 molecules of pyruvate. Also contains a secondary oxaloacetate (OAA) decarboxylase activity due to the common pyruvate enolate transition state formed following C-C bond cleavage in the retro-aldol and decarboxylation reactions. The polypeptide is Putative 4-hydroxy-4-methyl-2-oxoglutarate aldolase (Xanthomonas oryzae pv. oryzae (strain MAFF 311018)).